A 483-amino-acid chain; its full sequence is Protein nucleotidyltransferase YdiU (483 aa).

Gly81, Gly83, Arg84, Lys103, Asp115, Gly116, Arg166, and Arg173 together coordinate ATP. Asp244 acts as the Proton acceptor in catalysis. Mg(2+)-binding residues include Asn245 and Asp254. Residue Asp254 coordinates ATP.

This sequence belongs to the SELO family. Mg(2+) serves as cofactor. Requires Mn(2+) as cofactor.

The enzyme catalyses L-seryl-[protein] + ATP = 3-O-(5'-adenylyl)-L-seryl-[protein] + diphosphate. It carries out the reaction L-threonyl-[protein] + ATP = 3-O-(5'-adenylyl)-L-threonyl-[protein] + diphosphate. The catalysed reaction is L-tyrosyl-[protein] + ATP = O-(5'-adenylyl)-L-tyrosyl-[protein] + diphosphate. It catalyses the reaction L-histidyl-[protein] + UTP = N(tele)-(5'-uridylyl)-L-histidyl-[protein] + diphosphate. The enzyme catalyses L-seryl-[protein] + UTP = O-(5'-uridylyl)-L-seryl-[protein] + diphosphate. It carries out the reaction L-tyrosyl-[protein] + UTP = O-(5'-uridylyl)-L-tyrosyl-[protein] + diphosphate. Functionally, nucleotidyltransferase involved in the post-translational modification of proteins. It can catalyze the addition of adenosine monophosphate (AMP) or uridine monophosphate (UMP) to a protein, resulting in modifications known as AMPylation and UMPylation. The sequence is that of Protein nucleotidyltransferase YdiU from Shewanella halifaxensis (strain HAW-EB4).